The primary structure comprises 294 residues: MGWSLRMWIVSILVLTQLVNGALCWGDAGHYAVCKIAQSYFEEDTVVAVKKLLPESANGELAAVCSWPDEIKKLPQWRWTSALHFADTPDYKCNYEYSRDCPKDWCVTGAIFNYTNQLMSTSENSQSIVHYNLTEALMFLSHYMGDIHQPLHEGFIGDLGGNKIKVHWYNQETNLHRVWDDMIIESALETYYNSSLPRMIHELQAKLKNGWSNDVPSWESCQLNQTACPNPYASESIDLACKYAYRNATAGTTLGDYYFVSRLPVVEKRLAQGGIRLAGTLNRIFSAKRKLARA.

Positions 1-24 (MGWSLRMWIVSILVLTQLVNGALC) are cleaved as a signal peptide. Residues tryptophan 25 and histidine 30 each coordinate a divalent metal cation. Residue 25–30 (WGDAGH) participates in substrate binding. A disulfide bond links cysteine 34 and cysteine 65. Residues aspartate 69 and histidine 84 each contribute to the a divalent metal cation site. Residues 69-75 (DEIKKLP), 84-87 (HFAD), and 94-99 (NYEYSR) contribute to the substrate site. 3 disulfides stabilise this stretch: cysteine 93-cysteine 241, cysteine 101-cysteine 106, and cysteine 221-cysteine 228. Residues asparagine 113 and tyrosine 131 each contribute to the substrate site. N-linked (GlcNAc...) asparagine glycosylation is present at asparagine 113. A glycan (N-linked (GlcNAc...) asparagine) is linked at asparagine 132. Histidine 142, aspartate 146, histidine 152, histidine 176, and aspartate 180 together coordinate a divalent metal cation. Residues 142 to 191 (HYMGDIHQPLHEGFIGDLGGNKIKVHWYNQETNLHRVWDDMIIESALETY) are substrate binding. N-linked (GlcNAc...) asparagine glycans are attached at residues asparagine 193, asparagine 224, and asparagine 247. A propeptide spans 279–294 (GTLNRIFSAKRKLARA) (removed in mature form).

It belongs to the nuclease type I family. Monomer. It depends on Zn(2+) as a cofactor. Requires Mn(2+) as cofactor.

It carries out the reaction Endonucleolytic cleavage to 5'-phosphomononucleotide and 5'-phosphooligonucleotide end-products.. In terms of biological role, endonuclease that can use RNA and single-stranded DNA as substrates. In contradiction with PubMed:23620482, cannot hydrolyze single-stranded DNA and does not cleave mismatches. This Arabidopsis thaliana (Mouse-ear cress) protein is Endonuclease 3.